Consider the following 638-residue polypeptide: Chaperone protein DnaK (638 aa).

Thr-200 carries the phosphothreonine; by autocatalysis modification. The segment at 599–623 (LHMAATAEQQSASTGAGAGSSAKVD) is disordered. Positions 609–620 (SASTGAGAGSSA) are enriched in low complexity.

Belongs to the heat shock protein 70 family.

Its function is as follows. Acts as a chaperone. This chain is Chaperone protein DnaK, found in Xylella fastidiosa (strain M12).